Reading from the N-terminus, the 155-residue chain is Conopressin/neurophysin (155 aa).

The N-terminal stretch at 1–26 (MMSSLCGMPLTYLLTAAVLSLSLTDA) is a signal peptide. An intrachain disulfide couples C27 to C32. G35 is modified (glycine amide). Disulfide bonds link C50–C94, C53–C67, C61–C84, C68–C74, C101–C115, C109–C127, and C116–C121. A glycan (N-linked (GlcNAc...) asparagine) is linked at N88.

It belongs to the vasopressin/oxytocin family. Post-translationally, seven disulfide bonds are present in neurophysin.

It localises to the secreted. This chain is Conopressin/neurophysin, found in Lymnaea stagnalis (Great pond snail).